Here is a 52-residue protein sequence, read N- to C-terminus: Insulin (52 aa).

3 disulfides stabilise this stretch: Cys-7/Cys-38, Cys-19/Cys-51, and Cys-37/Cys-42.

It belongs to the insulin family. In terms of assembly, heterodimer of a B chain and an A chain linked by two disulfide bonds.

Its subcellular location is the secreted. In terms of biological role, insulin decreases blood glucose concentration. It increases cell permeability to monosaccharides, amino acids and fatty acids. It accelerates glycolysis, the pentose phosphate cycle, and glycogen synthesis in liver. The chain is Insulin (ins) from Atractosteus spatula (Alligator gar).